We begin with the raw amino-acid sequence, 192 residues long: dCTP deaminase, dUMP-forming (192 aa).

Residues 101 to 106, D119, 127 to 129, Q148, Y162, and Q174 each bind dCTP; these read KSSLGR and TLE. E129 serves as the catalytic Proton donor/acceptor. The disordered stretch occupies residues 162–192; that stretch reads YGSGADGSRYQGQRGPTASRSHVKFHRTHVE. The span at 171–181 shows a compositional bias: polar residues; the sequence is YQGQRGPTASR. The segment covering 182 to 192 has biased composition (basic residues); it reads SHVKFHRTHVE.

Belongs to the dCTP deaminase family. Homotrimer.

The catalysed reaction is dCTP + 2 H2O = dUMP + NH4(+) + diphosphate. It participates in pyrimidine metabolism; dUMP biosynthesis; dUMP from dCTP: step 1/1. In terms of biological role, bifunctional enzyme that catalyzes both the deamination of dCTP to dUTP and the hydrolysis of dUTP to dUMP without releasing the toxic dUTP intermediate. This chain is dCTP deaminase, dUMP-forming, found in Beutenbergia cavernae (strain ATCC BAA-8 / DSM 12333 / CCUG 43141 / JCM 11478 / NBRC 16432 / NCIMB 13614 / HKI 0122).